The following is a 281-amino-acid chain: Elongation factor Ts (281 aa).

Residues 80–83 (TDFV) are involved in Mg(2+) ion dislocation from EF-Tu.

This sequence belongs to the EF-Ts family.

The protein resides in the cytoplasm. Functionally, associates with the EF-Tu.GDP complex and induces the exchange of GDP to GTP. It remains bound to the aminoacyl-tRNA.EF-Tu.GTP complex up to the GTP hydrolysis stage on the ribosome. This Vibrio campbellii (strain ATCC BAA-1116) protein is Elongation factor Ts.